A 48-amino-acid chain; its full sequence is DNA-directed RNA polymerase subunit Rpo12 (48 aa).

Zn(2+)-binding residues include C6, C9, C26, and C29.

Belongs to the archaeal Rpo12/eukaryotic RPC10 RNA polymerase subunit family. In terms of assembly, part of the 13-subunit RNA polymerase. The cofactor is Zn(2+).

Its subcellular location is the cytoplasm. The enzyme catalyses RNA(n) + a ribonucleoside 5'-triphosphate = RNA(n+1) + diphosphate. In terms of biological role, DNA-dependent RNA polymerase (RNAP) catalyzes the transcription of DNA into RNA using the four ribonucleoside triphosphates as substrates. This chain is DNA-directed RNA polymerase subunit Rpo12, found in Sulfolobus acidocaldarius (strain ATCC 33909 / DSM 639 / JCM 8929 / NBRC 15157 / NCIMB 11770).